The following is a 346-amino-acid chain: Phenylalanine--tRNA ligase alpha subunit (346 aa).

Glutamate 261 is a Mg(2+) binding site.

The protein belongs to the class-II aminoacyl-tRNA synthetase family. Phe-tRNA synthetase alpha subunit type 1 subfamily. Tetramer of two alpha and two beta subunits. The cofactor is Mg(2+).

The protein resides in the cytoplasm. It catalyses the reaction tRNA(Phe) + L-phenylalanine + ATP = L-phenylalanyl-tRNA(Phe) + AMP + diphosphate + H(+). This Streptococcus agalactiae serotype Ia (strain ATCC 27591 / A909 / CDC SS700) protein is Phenylalanine--tRNA ligase alpha subunit.